The primary structure comprises 162 residues: Large ribosomal subunit protein uL15 (162 aa).

Positions 1-13 (MKLNEIRDNEGAT) are enriched in basic and acidic residues. The segment at 1–37 (MKLNEIRDNEGATKNRMRVGRGIGSGKGKTAGRGVKG) is disordered. The segment covering 21-35 (RGIGSGKGKTAGRGV) has biased composition (gly residues).

The protein belongs to the universal ribosomal protein uL15 family. In terms of assembly, part of the 50S ribosomal subunit.

Binds to the 23S rRNA. This is Large ribosomal subunit protein uL15 from Methylobacterium nodulans (strain LMG 21967 / CNCM I-2342 / ORS 2060).